The sequence spans 159 residues: NADH-quinone oxidoreductase subunit B (159 aa).

Positions 36, 37, 102, and 132 each coordinate [4Fe-4S] cluster.

It belongs to the complex I 20 kDa subunit family. As to quaternary structure, NDH-1 is composed of 14 different subunits. Subunits NuoB, C, D, E, F, and G constitute the peripheral sector of the complex. The cofactor is [4Fe-4S] cluster.

The protein resides in the cell inner membrane. It catalyses the reaction a quinone + NADH + 5 H(+)(in) = a quinol + NAD(+) + 4 H(+)(out). Functionally, NDH-1 shuttles electrons from NADH, via FMN and iron-sulfur (Fe-S) centers, to quinones in the respiratory chain. Couples the redox reaction to proton translocation (for every two electrons transferred, four hydrogen ions are translocated across the cytoplasmic membrane), and thus conserves the redox energy in a proton gradient. In Delftia acidovorans (strain DSM 14801 / SPH-1), this protein is NADH-quinone oxidoreductase subunit B.